The primary structure comprises 68 residues: Urocalcin (68 aa).

The signal sequence occupies residues 1–27; the sequence is MKASTLVVIFIVIFITISSFSIHDVQA. Residues 28–35 constitute a propeptide that is removed on maturation; the sequence is SGVEKREQ. Disulfide bonds link Cys-38–Cys-52, Cys-45–Cys-56, and Cys-51–Cys-67. An essential for stimulation of [3H]ryanodine binding to RYR1 region spans residues 57 to 59; that stretch reads KRR.

It belongs to the scorpion calcin family. Expressed by the venom gland.

The protein localises to the secreted. Functionally, this toxin only weakly stabilizes ryanodine receptor 1 (RyR1) opening in a long-lasting subconductance state (55% of the full conductance state obtained only at high concentrations (1 uM)). In addition, it has been shown to dose-dependently stimulate ryanodine binding to RyR1 with the lowest activity of all calcins (EC(50)=376 nM). It also augments the bell-shaped calcium-[3H]ryanodine binding curve that is maximal at about 10 uM calcium concentration. It binds a different site as ryanodine. It acts synergistically with caffeine. In contrast to other calcins, it does not trigger calcium release from sarcoplasmic vesicles even at high concentration (1 uM). In vivo, intracerebroventricular injection into mice induces neurotoxic symptoms, followed by death. The chain is Urocalcin from Urodacus yaschenkoi (Inland robust scorpion).